We begin with the raw amino-acid sequence, 354 residues long: MHVAALQNHLAPLLVPCSRVYAACMAVRRRFWESPMSPAFRPSRPVVSVGNIAWGGTGKTPLVDWLLHWAGTRGLNPAVLTRGYGAKPPTVPFLVGSQHTAEEAGDEPLMLARRNPYAAVLVDPVRRRAGRWAEHELRPHFYLLDDGMQHLAVRRDLDLVVLRPDDVLDQWGRVLPAGSWREGASALKSATAFFVKSSPEVFEALAPVLEERLAPYGVPVFSFWLRPSGLLRVGGNEQRPHFDGAPYVLVSGVGGPGQVGETATRYFGYAPVRHRVFPDHHPYGPDDVRSLAQEGAQLVCTPKDAVKLERFAGLDLWTFDLQTVFGPAIGTAAPFPQWWDERWARLARERAGTS.

53–60 (AWGGTGKT) is an ATP binding site.

The protein belongs to the LpxK family.

It catalyses the reaction a lipid A disaccharide + ATP = a lipid IVA + ADP + H(+). It functions in the pathway glycolipid biosynthesis; lipid IV(A) biosynthesis; lipid IV(A) from (3R)-3-hydroxytetradecanoyl-[acyl-carrier-protein] and UDP-N-acetyl-alpha-D-glucosamine: step 6/6. In terms of biological role, transfers the gamma-phosphate of ATP to the 4'-position of a tetraacyldisaccharide 1-phosphate intermediate (termed DS-1-P) to form tetraacyldisaccharide 1,4'-bis-phosphate (lipid IVA). The protein is Tetraacyldisaccharide 4'-kinase of Nitratidesulfovibrio vulgaris (strain ATCC 29579 / DSM 644 / CCUG 34227 / NCIMB 8303 / VKM B-1760 / Hildenborough) (Desulfovibrio vulgaris).